Reading from the N-terminus, the 473-residue chain is ATP synthase subunit beta (473 aa).

158 to 165 (GGAGVGKT) contributes to the ATP binding site.

Belongs to the ATPase alpha/beta chains family. In terms of assembly, F-type ATPases have 2 components, CF(1) - the catalytic core - and CF(0) - the membrane proton channel. CF(1) has five subunits: alpha(3), beta(3), gamma(1), delta(1), epsilon(1). CF(0) has three main subunits: a(1), b(2) and c(9-12). The alpha and beta chains form an alternating ring which encloses part of the gamma chain. CF(1) is attached to CF(0) by a central stalk formed by the gamma and epsilon chains, while a peripheral stalk is formed by the delta and b chains.

It localises to the cell membrane. The catalysed reaction is ATP + H2O + 4 H(+)(in) = ADP + phosphate + 5 H(+)(out). In terms of biological role, produces ATP from ADP in the presence of a proton gradient across the membrane. The catalytic sites are hosted primarily by the beta subunits. This is ATP synthase subunit beta from Anoxybacillus flavithermus (strain DSM 21510 / WK1).